The sequence spans 159 residues: MKITILAVGKLKEKYWKQAIAEYQKRLGAYTKIEIIEVPDEKAPENMSDKEVEQVKEKEGQRLLAKIKPQSTVITLEIQGNMLTSEGLAKNLQQRMVQGQSDFTFVIGGSNGLHQDVLDRSNYALSFSKMTFPHQMMRVILLEQVYRAFKIMRGEAYHK.

S-adenosyl-L-methionine-binding positions include Leu76, Gly108, and 127–132 (FSKMTF).

The protein belongs to the RNA methyltransferase RlmH family. In terms of assembly, homodimer.

It localises to the cytoplasm. The enzyme catalyses pseudouridine(1915) in 23S rRNA + S-adenosyl-L-methionine = N(3)-methylpseudouridine(1915) in 23S rRNA + S-adenosyl-L-homocysteine + H(+). In terms of biological role, specifically methylates the pseudouridine at position 1915 (m3Psi1915) in 23S rRNA. This Staphylococcus carnosus (strain TM300) protein is Ribosomal RNA large subunit methyltransferase H.